Here is a 574-residue protein sequence, read N- to C-terminus: Egalitarian protein homolog (574 aa).

The disordered stretch occupies residues 259–278; it reads LNEDGSENGSDEGEETNNNG. Residues 262–273 are compositionally biased toward acidic residues; that stretch reads DGSENGSDEGEE. The region spanning 312-414 is the 3'-5' exonuclease domain; that stretch reads NMEKKVVGLD…SLLQHEKFNK (103 aa).

In terms of assembly, component of a dynein-regulating complex composed of at least bicd-1, dlc-1 and egal-1.

It is found in the nucleus envelope. In terms of biological role, part of a complex with bicd-1 and dlc-1, which is recruited to the nuclear envelope by unc-83, where in turn, it recruits dynein to the nuclear surface and regulates nuclear migration in hypodermal precursor cells. This Caenorhabditis elegans protein is Egalitarian protein homolog.